The sequence spans 456 residues: Chromosomal replication initiator protein DnaA (456 aa).

The segment at 1-83 (MTASLWQQCL…LRFDIGNRPH (83 aa)) is domain I, interacts with DnaA modulators. The tract at residues 83–119 (HPVAVARAPARGADPVNNSQKSWESKAEAKPEPNHKS) is domain II. The interval 92–122 (ARGADPVNNSQKSWESKAEAKPEPNHKSNTN) is disordered. A compositionally biased stretch (basic and acidic residues) spans 105–117 (WESKAEAKPEPNH). Residues 120 to 336 (NTNVNYTFEN…GALNRVIANA (217 aa)) form a domain III, AAA+ region region. ATP-binding residues include glycine 164, glycine 166, lysine 167, and threonine 168. The interval 337–456 (NFTGRAINID…YSNLIRTLSS (120 aa)) is domain IV, binds dsDNA.

This sequence belongs to the DnaA family. As to quaternary structure, oligomerizes as a right-handed, spiral filament on DNA at oriC.

It is found in the cytoplasm. Its function is as follows. Plays an essential role in the initiation and regulation of chromosomal replication. ATP-DnaA binds to the origin of replication (oriC) to initiate formation of the DNA replication initiation complex once per cell cycle. Binds the DnaA box (a 9 base pair repeat at the origin) and separates the double-stranded (ds)DNA. Forms a right-handed helical filament on oriC DNA; dsDNA binds to the exterior of the filament while single-stranded (ss)DNA is stabiized in the filament's interior. The ATP-DnaA-oriC complex binds and stabilizes one strand of the AT-rich DNA unwinding element (DUE), permitting loading of DNA polymerase. After initiation quickly degrades to an ADP-DnaA complex that is not apt for DNA replication. Binds acidic phospholipids. The sequence is that of Chromosomal replication initiator protein DnaA from Aeromonas hydrophila subsp. hydrophila (strain ATCC 7966 / DSM 30187 / BCRC 13018 / CCUG 14551 / JCM 1027 / KCTC 2358 / NCIMB 9240 / NCTC 8049).